Here is a 506-residue protein sequence, read N- to C-terminus: Maturase K (506 aa).

It belongs to the intron maturase 2 family. MatK subfamily.

It localises to the plastid. The protein resides in the chloroplast. Functionally, usually encoded in the trnK tRNA gene intron. Probably assists in splicing its own and other chloroplast group II introns. This Artanema fimbriatum protein is Maturase K.